The primary structure comprises 1193 residues: MAPPVRPGMLPLLLLLLLPPLGSVPGVWSFSELFFMKEPQDATVTRKDPVFLDCQAHGEGPIKVTWLKNGAKLSENKRIQVLSNGSLYISEAEGRRGEQSDEGFYQCLAVNKYGAILSQKAHLTLSTISAFEVHPVSTEVPEGGVARFSCKISSTPPAVITWEFNRTALPMTMDSRVTALPSGVLQIYDAGPEDAGKYRCVAATHAHKRKSMEASLTIVPANETRSFYMPTIIASPQNVTASLHQTVVLECMATGYPKPIISWSRLDHKSIDVFNTRVLGNGNLIISDVKLQHAGVYVCRATTPGTRNFTVAMATLTVLAPPSFVEWPESLTRPRAGTARFVCQAEGIPSPKMSWLKNGRRIHSNGRIKMYNSKLVINQIIPEDDAIYQCMAENSQGSVLSRARLTVVMSEDRPSAPYNVHAETMSSSAILLAWERPLYNSDKVIAYSVHYMKAEGLNNEEYQVVLGNDTTHYIIDDLEPDSNYTFYIVAYMPMGASQMSDHVTQNTLEDVPLRPPEISLTSRSPTDILISWLPIPAKYRRGQVVLYRLSFRLSTENSIQVVELPGTVHEYLLEGLEPDSVYLVRITAATRVGLGESSVWTSHRTPKATSVKAPKSPELHLEPLNCTTISVRWLQDTEDPAAIRGYKLFYKEEGQQEHGPIFLDTGDLLYTLSGLDPRRKYHVRLLAYNNLEDGYQADQTVSTPGCVSVRDRMVPPPPPPHHLYAKANTSSSIFLHWRRPAFTTAQVINYTIRCNPVGLQNASLVLYLQTSETHMLVQGLEPNTKYEFAVRLHVDQLSSPWSPVVYHTTLPEAPTGPPVGVKVTLIEDDTALVSWKPPDGPETVVTRYTILYASRKAWIAGEWQVLHREGAITMALLENLVAGNVYIVKISASNEVGEGPFPNSVELAVLPKDASESNQRPKRLDSSDAKVYSGYYHLDQKSMTGIAVGVGIALTCILICVLILIYRSKARKSSASKTTQSGTQPLSRASASVAAGSDMGKNLERATENEESSVPMMPSCFIDAKGGTDLIINSYGPIIKNNPKKKWRFFQDTKKIKVEQTQRRITQTVCFYQPGTTVLISDEDSPSSPGQTTSFPRPFGPTTLDTEHSANSEGSHETGDSGRFSHESNDEIHLSSVISSTPPTSNSLTCGDSDGDAAPKKHGDPAQPLPAEQTSAPQPTPAGLRHAAESVPV.

The first 23 residues, 1-23 (MAPPVRPGMLPLLLLLLLPPLGS), serve as a signal peptide directing secretion. Ig-like domains are found at residues 24 to 124 (VPGV…AHLT), 126 to 217 (STIS…ASLT), 230 to 317 (PTII…ATLT), and 322 to 406 (PSFV…ARLT). At 24–944 (VPGVWSFSEL…YYHLDQKSMT (921 aa)) the chain is on the extracellular side. Disulfide bonds link cysteine 54–cysteine 107 and cysteine 150–cysteine 200. An N-linked (GlcNAc...) asparagine glycan is attached at asparagine 84. A glycan (N-linked (GlcNAc...) asparagine) is linked at asparagine 238. Intrachain disulfides connect cysteine 251–cysteine 299 and cysteine 343–cysteine 390. 5 consecutive Fibronectin type-III domains span residues 416–510 (APYN…TLED), 512–608 (PLRP…TPKA), 613–712 (APKS…VRDR), 719–812 (PPHH…TLPE), and 817–912 (PPVG…VLPK). N-linked (GlcNAc...) asparagine glycosylation is present at asparagine 625. A helical transmembrane segment spans residues 945-965 (GIAVGVGIALTCILICVLILI). Topologically, residues 966 to 1193 (YRSKARKSSA…LRHAAESVPV (228 aa)) are cytoplasmic. Disordered regions lie at residues 974–1018 (SASK…PMMP) and 1078–1193 (VLIS…SVPV). 2 stretches are compositionally biased toward polar residues: residues 978–990 (TTQSGTQPLSRAS) and 1086–1095 (PSSPGQTTSF). Residues 1105–1133 (DTEHSANSEGSHETGDSGRFSHESNDEIH) show a composition bias toward basic and acidic residues. Positions 1136-1150 (SVISSTPPTSNSLTC) are enriched in polar residues.

Belongs to the immunoglobulin superfamily. DCC family.

It is found in the membrane. In terms of biological role, may play a role in anteroposterior axis elongation. In Rattus norvegicus (Rat), this protein is Protogenin.